Consider the following 386-residue polypeptide: Homoserine O-succinyltransferase (386 aa).

The AB hydrolase-1 domain occupies 49–358 (NAILICHALS…DAEQGHDSFL (310 aa)). Catalysis depends on S156, which acts as the Nucleophile. Substrate is bound at residue R226. Residues D321 and H354 contribute to the active site. D355 serves as a coordination point for substrate.

The protein belongs to the AB hydrolase superfamily. MetX family. In terms of assembly, homodimer.

Its subcellular location is the cytoplasm. It catalyses the reaction L-homoserine + succinyl-CoA = O-succinyl-L-homoserine + CoA. The protein operates within amino-acid biosynthesis; L-methionine biosynthesis via de novo pathway; O-succinyl-L-homoserine from L-homoserine: step 1/1. Transfers a succinyl group from succinyl-CoA to L-homoserine, forming succinyl-L-homoserine. The protein is Homoserine O-succinyltransferase of Acinetobacter baumannii (strain AB307-0294).